We begin with the raw amino-acid sequence, 215 residues long: NADH-quinone oxidoreductase subunit C (215 aa).

Belongs to the complex I 30 kDa subunit family. NDH-1 is composed of 14 different subunits. Subunits NuoB, C, D, E, F, and G constitute the peripheral sector of the complex.

It is found in the cell inner membrane. It catalyses the reaction a quinone + NADH + 5 H(+)(in) = a quinol + NAD(+) + 4 H(+)(out). NDH-1 shuttles electrons from NADH, via FMN and iron-sulfur (Fe-S) centers, to quinones in the respiratory chain. The immediate electron acceptor for the enzyme in this species is believed to be ubiquinone. Couples the redox reaction to proton translocation (for every two electrons transferred, four hydrogen ions are translocated across the cytoplasmic membrane), and thus conserves the redox energy in a proton gradient. In Francisella philomiragia subsp. philomiragia (strain ATCC 25017 / CCUG 19701 / FSC 153 / O#319-036), this protein is NADH-quinone oxidoreductase subunit C.